Reading from the N-terminus, the 724-residue chain is Acyl-coenzyme A oxidase 2 (724 aa).

Positions 1 to 48 (MAMLSQPNDGHDHPEKKDPDTTPKQVAGVISSQDPPHPAKDVAEERAR) are disordered. 2 stretches are compositionally biased toward basic and acidic residues: residues 9 to 21 (DGHDHPEKKDPDT) and 37 to 48 (HPAKDVAEERAR).

This sequence belongs to the acyl-CoA oxidase family. Requires FAD as cofactor.

Its subcellular location is the peroxisome. The catalysed reaction is a 2,3-saturated acyl-CoA + O2 = a (2E)-enoyl-CoA + H2O2. Its pathway is lipid metabolism; peroxisomal fatty acid beta-oxidation. In Candida tropicalis (Yeast), this protein is Acyl-coenzyme A oxidase 2 (POX2).